A 97-amino-acid chain; its full sequence is Co-chaperonin GroES (97 aa).

It belongs to the GroES chaperonin family. In terms of assembly, heptamer of 7 subunits arranged in a ring. Interacts with the chaperonin GroEL.

It is found in the cytoplasm. Together with the chaperonin GroEL, plays an essential role in assisting protein folding. The GroEL-GroES system forms a nano-cage that allows encapsulation of the non-native substrate proteins and provides a physical environment optimized to promote and accelerate protein folding. GroES binds to the apical surface of the GroEL ring, thereby capping the opening of the GroEL channel. This chain is Co-chaperonin GroES, found in Klebsiella aerogenes (Enterobacter aerogenes).